The following is a 273-amino-acid chain: Shikimate dehydrogenase (NADP(+)) (273 aa).

Shikimate contacts are provided by residues 14–16 (SKS) and threonine 61. The Proton acceptor role is filled by lysine 65. NADP(+) is bound at residue glutamate 77. The shikimate site is built by asparagine 86 and aspartate 102. NADP(+)-binding positions include 126 to 130 (GAGGA), 150 to 155 (NRTYEK), and methionine 213. Tyrosine 215 is a binding site for shikimate. Glycine 237 serves as a coordination point for NADP(+).

It belongs to the shikimate dehydrogenase family. In terms of assembly, homodimer.

The enzyme catalyses shikimate + NADP(+) = 3-dehydroshikimate + NADPH + H(+). It functions in the pathway metabolic intermediate biosynthesis; chorismate biosynthesis; chorismate from D-erythrose 4-phosphate and phosphoenolpyruvate: step 4/7. Its function is as follows. Involved in the biosynthesis of the chorismate, which leads to the biosynthesis of aromatic amino acids. Catalyzes the reversible NADPH linked reduction of 3-dehydroshikimate (DHSA) to yield shikimate (SA). The chain is Shikimate dehydrogenase (NADP(+)) from Aliivibrio fischeri (strain MJ11) (Vibrio fischeri).